Here is a 772-residue protein sequence, read N- to C-terminus: Carnitine O-palmitoyltransferase 1, muscle isoform (772 aa).

The Cytoplasmic segment spans residues 1–47 (MAEAHQAVAFQFTVTPDGVDFRLSREALKHVYLSGINSWKKRLIRIK). Residues 48 to 73 (NGILRGVYPGSPTSWLVVIMATVGSS) traverse the membrane as a helical segment. The Mitochondrial intermembrane segment spans residues 74–102 (FCNVDISLGLVSCIQRCLPQGCGPYQTPQ). Residues 103-122 (TRALLSMAIFSTGVWVTGIF) form a helical membrane-spanning segment. The Cytoplasmic portion of the chain corresponds to 123–772 (FFRQTLKLLL…DLFQVPKAYS (650 aa)). The active-site Proton acceptor is the histidine 473. A CoA-binding site is contributed by 555–567 (GKGLIKKCRTSPD). The (R)-carnitine site is built by tyrosine 589 and threonine 602.

The protein belongs to the carnitine/choline acetyltransferase family. Strong expression in heart and skeletal muscle. No expression in liver and kidney.

The protein resides in the mitochondrion outer membrane. It catalyses the reaction (R)-carnitine + hexadecanoyl-CoA = O-hexadecanoyl-(R)-carnitine + CoA. It participates in lipid metabolism; fatty acid beta-oxidation. Its function is as follows. Catalyzes the transfer of the acyl group of long-chain fatty acid-CoA conjugates onto carnitine, an essential step for the mitochondrial uptake of long-chain fatty acids and their subsequent beta-oxidation in the mitochondrion. The chain is Carnitine O-palmitoyltransferase 1, muscle isoform (CPT1B) from Homo sapiens (Human).